The chain runs to 300 residues: Protoheme IX farnesyltransferase (300 aa).

The next 9 membrane-spanning stretches (helical) occupy residues 24-44 (VTQLAVFCAVIGMFLATPGMV), 46-66 (WHVLIGGTVGIWLLAGAAFAI), 94-114 (PQILIFSAVLGSVGAWTLYTF), 118-138 (LTMWLTIATFVGYAVIYTLLL), 146-166 (IVIGGASGAMPPALGWAAVTG), 172-192 (AWILVLIIFVWTPPHFWVLAL), 217-237 (LHILLYTVILFAVTLMPFISG), 239-259 (SGAVYLTSAVLLGAVFLAYAW), and 278-298 (IVYLSLLFAALLVDHYARPLL).

It belongs to the UbiA prenyltransferase family. Protoheme IX farnesyltransferase subfamily.

It is found in the cell inner membrane. It catalyses the reaction heme b + (2E,6E)-farnesyl diphosphate + H2O = Fe(II)-heme o + diphosphate. Its pathway is porphyrin-containing compound metabolism; heme O biosynthesis; heme O from protoheme: step 1/1. In terms of biological role, converts heme B (protoheme IX) to heme O by substitution of the vinyl group on carbon 2 of heme B porphyrin ring with a hydroxyethyl farnesyl side group. This Burkholderia lata (strain ATCC 17760 / DSM 23089 / LMG 22485 / NCIMB 9086 / R18194 / 383) protein is Protoheme IX farnesyltransferase.